A 341-amino-acid chain; its full sequence is THO complex subunit 6 (341 aa).

WD repeat units lie at residues 22–61 (RLHMTIFSQSVSPCGKFLAAGNNYGQIAIFSLSSALSSEA), 74–112 (AHDGPVYSMVSTDRHLLSAGDGEVKAWLWAEMLKKGCKE), 124–165 (LEVP…RVLR), 166–205 (GHTDYIHCLALRERSPEVLSGGEDGAVRLWDLRTAKEVQT), 215–254 (SRPHNGRWIGCLATDSDWMVCGGGPALTLWHLRSSTPTTI), 256–293 (PIRAPQKHVTFYQDLILSAGQGRCVNQWQLSGELKAQV), and 295–339 (GSSP…AFSL). A Phosphoserine modification is found at S180.

This sequence belongs to the WD repeat THOC6 family. In terms of assembly, component of the THO subcomplex, which is composed of THOC1, THOC2, THOC3, THOC5, THOC6 and THOC7. The THO subcomplex interacts with DDX39B to form the THO-DDX39B complex which multimerizes into a 28-subunit tetrameric assembly. Component of the transcription/export (TREX) complex at least composed of ALYREF/THOC4, DDX39B, SARNP/CIP29, CHTOP and the THO subcomplex; in the complex interacts with THOC5; together with THOC5 and THOC7, plays a key structural role in the oligomerization of the THO-DDX39B complex. TREX seems to have a dynamic structure involving ATP-dependent remodeling.

Its subcellular location is the nucleus. It is found in the nucleus speckle. Component of the THO subcomplex of the TREX complex which is thought to couple mRNA transcription, processing and nuclear export, and which specifically associates with spliced mRNA and not with unspliced pre-mRNA. Plays a key structural role in the oligomerization of the THO-DDX39B complex. TREX is recruited to spliced mRNAs by a transcription-independent mechanism, binds to mRNA upstream of the exon-junction complex (EJC) and is recruited in a splicing- and cap-dependent manner to a region near the 5' end of the mRNA where it functions in mRNA export to the cytoplasm via the TAP/NXF1 pathway. Plays a role in apoptosis negative control involved in brain development. In terms of biological role, (Microbial infection) The TREX complex is essential for the export of Kaposi's sarcoma-associated herpesvirus (KSHV) intronless mRNAs and infectious virus production. The polypeptide is THO complex subunit 6 (THOC6) (Homo sapiens (Human)).